The primary structure comprises 148 residues: F420H(2)-dependent quinone reductase MT1609 (148 aa).

Residues 46–48, 52–57, 68–71, 79–83, and Tyr-125 each bind coenzyme F420-(gamma-Glu)n; these read AKT, RKTPLM, VASL, and VWYHN.

The protein belongs to the F420H(2)-dependent quinone reductase family.

The protein resides in the cell membrane. The catalysed reaction is oxidized coenzyme F420-(gamma-L-Glu)(n) + a quinol + H(+) = reduced coenzyme F420-(gamma-L-Glu)(n) + a quinone. Its function is as follows. Involved in a F420-dependent anti-oxidant mechanism that protects M.tuberculosis against oxidative stress and bactericidal agents. Catalyzes the F420H(2)-dependent two-electron reduction of quinones to dihydroquinones, thereby preventing the formation of cytotoxic semiquinones obtained by the one-electron reduction pathway. In vitro, catalyzes the reduction of menadione to menadiol; since menaquinone is the sole quinone electron carrier in the respiratory chain in M.tuberculosis, the physiological electron acceptor for Fqr-mediated F420H(2) oxidation is therefore likely to be the endogenous menaquinone found in the membrane fraction of M.tuberculosis. In Mycobacterium tuberculosis (strain CDC 1551 / Oshkosh), this protein is F420H(2)-dependent quinone reductase MT1609.